Consider the following 157-residue polypeptide: Large ribosomal subunit protein uL15 (157 aa).

Positions Met1–Ser40 are disordered. Residues Arg21–Ile35 are compositionally biased toward gly residues.

The protein belongs to the universal ribosomal protein uL15 family. In terms of assembly, part of the 50S ribosomal subunit.

Binds to the 23S rRNA. This chain is Large ribosomal subunit protein uL15, found in Ruegeria pomeroyi (strain ATCC 700808 / DSM 15171 / DSS-3) (Silicibacter pomeroyi).